Consider the following 526-residue polypeptide: Peptide chain release factor 3 (526 aa).

The 267-residue stretch at 11–277 (SKRRTFAIIS…SLIKWAPSPL (267 aa)) folds into the tr-type G domain. Residues 20–27 (SHPDAGKT), 88–92 (DTPGH), and 142–145 (NKLD) contribute to the GTP site.

Belongs to the TRAFAC class translation factor GTPase superfamily. Classic translation factor GTPase family. PrfC subfamily.

Its subcellular location is the cytoplasm. In terms of biological role, increases the formation of ribosomal termination complexes and stimulates activities of RF-1 and RF-2. It binds guanine nucleotides and has strong preference for UGA stop codons. It may interact directly with the ribosome. The stimulation of RF-1 and RF-2 is significantly reduced by GTP and GDP, but not by GMP. The sequence is that of Peptide chain release factor 3 from Buchnera aphidicola subsp. Acyrthosiphon pisum (strain Tuc7).